Consider the following 58-residue polypeptide: Small ribosomal subunit protein bS21 (58 aa).

The protein belongs to the bacterial ribosomal protein bS21 family.

In Lactobacillus acidophilus (strain ATCC 700396 / NCK56 / N2 / NCFM), this protein is Small ribosomal subunit protein bS21.